A 257-amino-acid chain; its full sequence is Flagellar brake protein YcgR 1 (257 aa).

Over residues 1-18 (MDTTQSNGQTDTQGQLHA) the composition is skewed to polar residues. The segment at 1 to 30 (MDTTQSNGQTDTQGQLHAQTAEGGNDFGRR) is disordered. The region spanning 133-246 (QRREYFRVDA…AENTLQRLIT (114 aa)) is the PilZ domain.

This sequence belongs to the YcgR family. As to quaternary structure, monomer. Interacts with the flagellar basal bodies.

The protein resides in the bacterial flagellum basal body. Its function is as follows. Acts as a flagellar brake, regulating swimming and swarming in a bis-(3'-5') cyclic diguanylic acid (c-di-GMP)-dependent manner. Binds 1 c-di-GMP dimer per subunit. Increasing levels of c-di-GMP lead to decreased motility. The sequence is that of Flagellar brake protein YcgR 1 from Paraburkholderia phytofirmans (strain DSM 17436 / LMG 22146 / PsJN) (Burkholderia phytofirmans).